The chain runs to 361 residues: Phospho-N-acetylmuramoyl-pentapeptide-transferase (361 aa).

Helical transmembrane passes span 25–45, 72–92, 95–115, 135–155, 169–189, 200–220, 240–260, 264–284, 289–309, and 338–358; these read TGGAMVTGALFVFMFGPWIID, TPTMGGLMILSGLTVGTVLWA, LNPYVWIVLAVTLGFGFVGFY, LLIEFIIAGAACFALVWLGRA, VMLNLGWAFVVFGAFVVVGAG, GLAIVPVMIAAASFGLISYLA, LAVLCGALLGAGLGFLWFNAP, IFMGDTGSLALGGMLGSIAVA, IVLAVIGGLFVLEAVSVIVQV, and QIVIRFWIIAVMLALAGLSTL.

The protein belongs to the glycosyltransferase 4 family. MraY subfamily. Mg(2+) is required as a cofactor.

The protein resides in the cell inner membrane. The enzyme catalyses UDP-N-acetyl-alpha-D-muramoyl-L-alanyl-gamma-D-glutamyl-meso-2,6-diaminopimeloyl-D-alanyl-D-alanine + di-trans,octa-cis-undecaprenyl phosphate = di-trans,octa-cis-undecaprenyl diphospho-N-acetyl-alpha-D-muramoyl-L-alanyl-D-glutamyl-meso-2,6-diaminopimeloyl-D-alanyl-D-alanine + UMP. The protein operates within cell wall biogenesis; peptidoglycan biosynthesis. Its function is as follows. Catalyzes the initial step of the lipid cycle reactions in the biosynthesis of the cell wall peptidoglycan: transfers peptidoglycan precursor phospho-MurNAc-pentapeptide from UDP-MurNAc-pentapeptide onto the lipid carrier undecaprenyl phosphate, yielding undecaprenyl-pyrophosphoryl-MurNAc-pentapeptide, known as lipid I. The polypeptide is Phospho-N-acetylmuramoyl-pentapeptide-transferase (Rhodopseudomonas palustris (strain TIE-1)).